The primary structure comprises 91 residues: Small ribosomal subunit protein bS20 (91 aa).

Residues 1–21 (MPLHKSAEKRLRQAARRNERN) show a composition bias toward basic and acidic residues. The interval 1–24 (MPLHKSAEKRLRQAARRNERNRAR) is disordered.

Belongs to the bacterial ribosomal protein bS20 family.

Functionally, binds directly to 16S ribosomal RNA. The chain is Small ribosomal subunit protein bS20 from Chlorobaculum parvum (strain DSM 263 / NCIMB 8327) (Chlorobium vibrioforme subsp. thiosulfatophilum).